The following is a 222-amino-acid chain: Prolactin-2C5 (222 aa).

An N-terminal signal peptide occupies residues 1–29 (MLPSLIQPCSWILLLLLVNSSLLWKNVAS). Cysteines 33 and 40 form a disulfide. Asn57 is a glycosylation site (N-linked (GlcNAc...) asparagine). 2 disulfide bridges follow: Cys87–Cys197 and Cys214–Cys222.

Belongs to the somatotropin/prolactin family. Post-translationally, N-glycosylated and sialylated. In terms of tissue distribution, expressed in placenta (at protein level). Expressed in the tail hair follicle, with highest expression detected in the keratinocytes of the outer root sheath. Expressed in ear skin with lesser amounts in small intestine. Not detected in brain at 18 dpc, postnatal day 25 or postnatal day 55.

It localises to the secreted. The sequence is that of Prolactin-2C5 from Mus musculus (Mouse).